The chain runs to 526 residues: MKYNEQEVDRRRTFAIVSHPDAGKTTITEKLLLFGGAIQQAGEVRARKAARHATSDWMEMEKQRGISVTSSVMKFTYRDYEVNLLDTPGHNDFSEDTYRVLTAVDSALMVIDSVKGVESQTIKLLDVCRLRHTPIMTFINKLDREGRDPFELIDEIEKVLRIQCAPMTWPIGMGKRFRGTYHLYTKELVIFDAEAERGTGGVISMTGLDDPQLDELLGSQADELRADVELLEGAAHPFEEEAYHAGLQTPVFFGSAINTFGVQQLLDTFVDHAPAPLPREAVSRTVSPYEEPFTAFAFKIQANMDPAHRDRIAFFRICSGKFTRGMKVRHVRLGREVAINNATIFMAQDRTHVDEAFPGDIIGIHNHGTIKIGDTFTLGEDIKFTGIPNFAPEHFRRVRLLDPLKSKALEKGLTQLAEEGTTQVFRPLMGADWVVGAVGLLQFDVVMHRLEHEYNVKATYEPVSYVTARWVTGEKKKVEEFQKKEVMNCYIDGEGDLAYLAGSQWRLDNTMDNWKDLTFHATREHS.

Residues aspartate 9–leucine 277 form the tr-type G domain. GTP is bound by residues serine 18–threonine 25, aspartate 86–histidine 90, and asparagine 140–aspartate 143.

The protein belongs to the TRAFAC class translation factor GTPase superfamily. Classic translation factor GTPase family. PrfC subfamily.

Its subcellular location is the cytoplasm. Functionally, increases the formation of ribosomal termination complexes and stimulates activities of RF-1 and RF-2. It binds guanine nucleotides and has strong preference for UGA stop codons. It may interact directly with the ribosome. The stimulation of RF-1 and RF-2 is significantly reduced by GTP and GDP, but not by GMP. The polypeptide is Peptide chain release factor 3 (Geobacter sulfurreducens (strain ATCC 51573 / DSM 12127 / PCA)).